The primary structure comprises 1262 residues: Protein stoned-B (1262 aa).

4 short sequence motifs (NPF) span residues 3–5 (NPF), 19–21 (NPF), 33–35 (NPF), and 43–45 (NPF). The tract at residues 17-36 (AANPFLMQSEPEPSSDNPFM) is disordered. Residues 49–189 (ADDLELGAEP…DVSVDSGSSA (141 aa)) form a disordered region. Residues 50–60 (DDLELGAEPEA) are compositionally biased toward acidic residues. A compositionally biased stretch (low complexity) spans 101 to 111 (PPQSQPQLQSH). A compositionally biased stretch (pro residues) spans 115–124 (HPPPPRPLVP). Residues 128 to 145 (TQDLISTVSSQLDETSSE) show a composition bias toward polar residues. The segment covering 172-189 (DSGLADLLDVSVDSGSSA) has biased composition (low complexity). Residues 210-212 (NPF) carry the NPF 5 motif. Disordered regions lie at residues 225-452 (VPLP…SPPT) and 474-507 (EEMD…NFAP). Residues 233–272 (KQPPRPPPPRPAPPRPAPPGQAAPQRPPPPLAAVNPPPAA) show a composition bias toward pro residues. Over residues 325–345 (DLDETIGEGEPPEQEEPDTEQ) the composition is skewed to acidic residues. Residues 384–401 (QVNNMAAPSGTASTQRAT) are compositionally biased toward polar residues. A compositionally biased stretch (acidic residues) spans 417 to 429 (DDEDEPEAMQEPE). The NPF 6 signature appears at 493–495 (NPF). Phosphoserine occurs at positions 623 and 626. The disordered stretch occupies residues 643-709 (SGVAPQLAPP…QDTPQTPLYD (67 aa)). An NPF 7 motif is present at residues 673–675 (NPF). The 175-residue stretch at 728–902 (GWEMQLRQPN…KIPALRERAL (175 aa)) folds into the SHD domain. The tract at residues 847–1108 (KEFGSDLKKL…KGIERILGAV (262 aa)) is interaction with Syt. In terms of domain architecture, MHD spans 906–1219 (MEEVQVTAVD…ARHEYKVGIE (314 aa)). Positions 1226-1262 (TNAYLAATRPIREEPPTTATKPTASPVAPSDSDTDSN) are disordered. Residues 1241-1254 (PTTATKPTASPVAP) are compositionally biased toward low complexity.

This sequence belongs to the Stoned B family. Interacts with the second C2 domain of Syt.

It is found in the cytoplasm. Its subcellular location is the synapse. Its function is as follows. Adapter protein involved in endocytic recycling of synaptic vesicles membranes. May act by mediating the retrieval of synaptotagmin protein Syt from the plasma membrane, thereby facilitating the internalization of multiple synaptic vesicles from the plasma membrane. This is Protein stoned-B (stnB) from Drosophila melanogaster (Fruit fly).